Consider the following 4151-residue polypeptide: Mycoketide-CoA synthase (4151 aa).

Residues 2–32 adopt a coiled-coil conformation; it reads VDQLQHATEALRKALVQVERLKRTNRALLER. A Ketosynthase family 3 (KS3) 1 domain is found at 34-457; the sequence is SEPIAIVGMS…GTNAHVIIEA (424 aa). Module stretches follow at residues 35–2038 and 2057–4070; these read EPIA…RTEL and DPIA…RREL. Cys203 serves as the catalytic Acyl-thioester intermediate; for beta-ketoacyl synthase 1 activity. Catalysis depends on for beta-ketoacyl synthase 1 activity residues His338 and His379. The segment at 559 to 880 is acyltransferase 1; sequence VFVFPGQGSQ…AASAFVAGVA (322 aa). Ser650 serves as the catalytic Acyl-ester intermediate; for acyltransferase 1 activity. An N-terminal hotdog fold 1 region spans residues 926 to 1048; sequence HPLLGAVVDL…GILRPGSVEP (123 aa). The tract at residues 926–1194 is dehydratase 1; the sequence is HPLLGAVVDL…VARPVTERQL (269 aa). The PKS/mFAS DH 1 domain occupies 926 to 1195; that stretch reads HPLLGAVVDL…ARPVTERQLL (270 aa). The active-site Proton acceptor; for dehydratase activity 1 is the His958. Residues 1060–1195 form a C-terminal hotdog fold 1 region; the sequence is AVTVDVADGY…ARPVTERQLL (136 aa). Asp1120 acts as the Proton donor; for dehydratase activity 1 in catalysis. Positions 1366 to 1671 are enoyl reductase 1; it reads GTFENLRLEP…QARHTGKVVM (306 aa). The interval 1680–1858 is beta-ketoacyl reductase 1; it reads GTVLITGGTG…AISLGWGLWD (179 aa). Tyr1828 acts as the For beta-ketoacyl reductase 1 activity in catalysis. A Carrier 1 domain is found at 1963-2038; that stretch reads AVLLGLVRLH…RLASYIRTEL (76 aa). Residue Ser1998 is modified to O-(pantetheine 4'-phosphoryl)serine. Residues 2056 to 2480 form the Ketosynthase family 3 (KS3) 2 domain; the sequence is EDPIAIVGMA…GTNAHVIIEA (425 aa). Cys2226 functions as the Acyl-thioester intermediate; for beta-ketoacyl synthase 2 activity in the catalytic mechanism. Residues His2361 and His2402 each act as for beta-ketoacyl synthase 2 activity in the active site. Residues 2582–2893 form an acyltransferase 2 region; the sequence is VFVFPGQGSQ…AVAQGFVTGM (312 aa). Ser2672 (acyl-ester intermediate; for acyltransferase 2 activity) is an active-site residue. Residues 2940–3062 form an N-terminal hotdog fold 2 region; the sequence is HALLGAVIDL…GALRAGSAEP (123 aa). The dehydratase 2 stretch occupies residues 2940-3215; the sequence is HALLGAVIDL…ARPVTDQQLR (276 aa). In terms of domain architecture, PKS/mFAS DH 2 spans 2940-3215; that stretch reads HALLGAVIDL…ARPVTDQQLR (276 aa). His2972 serves as the catalytic Proton acceptor; for dehydratase activity 2. The C-terminal hotdog fold 2 stretch occupies residues 3074-3215; that stretch reads AVPVEVADGY…ARPVTDQQLR (142 aa). The active-site Proton donor; for dehydratase activity 2 is the Asp3135. The segment at 3395 to 3701 is enoyl reductase 2; that stretch reads GTFENLRLEL…QARHTGKVVM (307 aa). The segment at 3710-3888 is beta-ketoacyl reductase 2; the sequence is GTVLITGGTG…AISLGWGLWD (179 aa). Tyr3858 functions as the For beta-ketoacyl reductase 2 activity in the catalytic mechanism. A Carrier 2 domain is found at 3995-4070; the sequence is AVLLDLVRSH…ALAGYMRREL (76 aa). Ser4030 bears the O-(pantetheine 4'-phosphoryl)serine mark.

As to quaternary structure, forms a large supramolecular assembly mediated through specific interactions between the N- and C-terminus linkers.

The enzyme catalyses a medium-chain fatty acyl-CoA + 5 (S)-methylmalonyl-CoA + 5 malonyl-CoA + 22 NADPH + 32 H(+) = a mycoketide-CoA + 10 CO2 + 22 NADP(+) + 10 CoA + 11 H2O. Its pathway is lipid metabolism; fatty acid metabolism. Functionally, involved in the synthesis of beta-D-mannosyl phosphomycoketide (MPM), an antigenic mycobacterial polyketide. Binds a fatty acyl-CoA as a starter unit, and extends it by five rounds of alternative additions of malonyl-CoA and methylmalonyl-CoA extender units. Depending on the starter unit, the enzyme forms mycoketide-CoAs of different lengths. Shows preference for small-/medium-chain starter fatty acyl substrates. Uses a hybrid modularly iterative mechanism, by forming a supramolecular assembly to perform repetitive cycles of iterations. This is Mycoketide-CoA synthase from Mycobacterium tuberculosis (strain ATCC 25618 / H37Rv).